We begin with the raw amino-acid sequence, 422 residues long: DNA-directed RNA polymerase III subunit RPC4 (422 aa).

Disordered regions lie at residues 1–80 (MSSN…GQQR), 115–190 (KSEG…DDEE), 219–244 (IQEA…GTGL), and 318–350 (RPAV…TKDA). Positions 25-29 (KPSLK) match the Nuclear localization signal motif. Positions 28 to 37 (LKFKPKAVAR) are enriched in basic residues. A compositionally biased stretch (basic and acidic residues) spans 38-64 (KSKEEREAAASKVKLEEESKRGNDKKH). 2 positions are modified to phosphoserine: Ser-137 and Ser-138. Acidic residues predominate over residues 138-148 (SENEAEDDDNE). Residues 160 to 170 (MGKEFEARNLI) show a composition bias toward basic and acidic residues. A phosphoserine mark is found at Ser-178, Ser-182, and Ser-224. Residues 219-229 (IQEALSEKPTR) are compositionally biased toward basic and acidic residues. Phosphothreonine occurs at positions 228 and 232.

The protein belongs to the eukaryotic RPC4/POLR3D RNA polymerase subunit family. In terms of assembly, component of the RNA polymerase III (Pol III) complex consisting of 17 subunits. Interacts with RPC37/RPC5. RPC53/RPC4, RPC37/RPC5 and RPC11/RPC10 probably form a Pol III subcomplex.

It is found in the nucleus. DNA-dependent RNA polymerase catalyzes the transcription of DNA into RNA using the four ribonucleoside triphosphates as substrates. Specific peripheric component of RNA polymerase III which synthesizes small RNAs, such as 5S rRNA and tRNAs. Essential for tRNA synthesis. The RPC53/RPC4-RPC37/RPC5 subcomplex is required for terminator recognition and reinitiation. This Saccharomyces cerevisiae (strain ATCC 204508 / S288c) (Baker's yeast) protein is DNA-directed RNA polymerase III subunit RPC4 (RPC53).